The following is an 814-amino-acid chain: Plakophilin-2 (814 aa).

Residues 1-329 (MAIPGSLGEC…MTLERAVNML (329 aa)) form a required for binding to single-stranded DNA region. S44 bears the Phosphoserine mark. Position 46 is an omega-N-methylarginine (R46). Residues S82 and S130 each carry the phosphoserine modification. ARM repeat units lie at residues 200–240 (TCQH…SIKG), 309–352 (CDCL…ESFQ), 354–393 (SEAR…NLVF), 503–549 (PDGR…NLSY), 604–644 (PRGI…NLTA), 652–691 (SVAR…NLSR), 696–737 (QNEI…NLMQ), and 740–782 (YQNA…SLWA).

Belongs to the beta-catenin family. In terms of assembly, interacts with DSC2. Interacts with JUP. Interacts with KRT5/CK5, KRT8/CK8, KRT14/CK14, KRT18/CK18 and VIM. Interacts (via N-terminus) with MARK3/C-TAK1. Interacts with DSP. Interacts with DSG1, DSG2 and DSG3. Interacts (via N-terminus) with CTNNB1. Interacts with CDH1. Interacts with the RNA polymerase III (Pol III) complex proteins POLR3A/RPC155, POLR3F/RPC39 and POLR3C/RPC82. Interacts with CTNNA3. Interacts (via N-terminus) with SCN5A/Nav1.5. Interacts with ANK3/ANKG and GJA1/CX43. As to expression, expressed in the heart (at protein level).

The protein localises to the nucleus. It is found in the cell junction. Its subcellular location is the desmosome. The protein resides in the cytoplasm. A component of desmosome cell-cell junctions which are required for positive regulation of cellular adhesion. Regulates focal adhesion turnover resulting in changes in focal adhesion size, cell adhesion and cell spreading, potentially via transcriptional modulation of beta-integrins. Required to maintain gingival epithelial barrier function. Important component of the desmosome that is also required for localization of desmosome component proteins such as DSC2, DSG2 and JUP to the desmosome cell-cell junction. Required for the formation of desmosome cell junctions in cardiomyocytes, thereby required for the correct formation of the heart, specifically trabeculation and formation of the atria walls. Loss of desmosome cell junctions leads to mis-localization of DSP and DSG2 resulting in disruption of cell-cell adhesion and disordered intermediate filaments. Modulates profibrotic gene expression in cardiomyocytes via regulation of DSP expression and subsequent activation of downstream TGFB1 and MAPK14/p38 MAPK signaling. Required for cardiac sodium current propagation and electrical synchrony in cardiac myocytes, via ANK3 stabilization and modulation of SCN5A/Nav1.5 localization to cell-cell junctions. Required for mitochondrial function, nuclear envelope integrity and positive regulation of SIRT3 transcription via maintaining DES localization at its nuclear envelope and cell tip anchoring points, and thereby preserving regulation of the transcriptional program. Maintenance of nuclear envelope integrity protects against DNA damage and transcriptional dysregulation of genes, especially those involved in the electron transport chain, thereby preserving mitochondrial function and protecting against superoxide radical anion generation. Binds single-stranded DNA (ssDNA). May regulate the localization of GJA1 to gap junctions in intercalated disks of the heart. The chain is Plakophilin-2 from Rattus norvegicus (Rat).